We begin with the raw amino-acid sequence, 258 residues long: Indole-3-glycerol phosphate synthase (258 aa).

It belongs to the TrpC family.

It catalyses the reaction 1-(2-carboxyphenylamino)-1-deoxy-D-ribulose 5-phosphate + H(+) = (1S,2R)-1-C-(indol-3-yl)glycerol 3-phosphate + CO2 + H2O. It functions in the pathway amino-acid biosynthesis; L-tryptophan biosynthesis; L-tryptophan from chorismate: step 4/5. The sequence is that of Indole-3-glycerol phosphate synthase from Campylobacter jejuni (strain RM1221).